Here is a 163-residue protein sequence, read N- to C-terminus: Sperm acrosome membrane-associated protein 3 (163 aa).

Residues 1–35 (MEAGSWAPRRWPRPPGIVLLALASVLSSLLSSGQA) form the signal peptide. The region spanning 36 to 163 (RVYSRCELAR…LSDWVDGCEL (128 aa)) is the C-type lysozyme domain. Intrachain disulfides connect C41-C161, C65-C149, C99-C114, and C110-C128.

This sequence belongs to the glycosyl hydrolase 22 family. In terms of assembly, interacts with ASTL.

The protein resides in the secreted. Functionally, sperm surface membrane protein that may be involved in sperm-egg plasma membrane adhesion and fusion during fertilization. It could be a potential receptor for the egg oligosaccharide residue N-acetylglucosamine, which is present in the extracellular matrix over the egg plasma membrane. The processed form has no detectable bacteriolytic activity in vitro. This is Sperm acrosome membrane-associated protein 3 (SPACA3) from Bos taurus (Bovine).